The sequence spans 66 residues: DNA-directed RNA polymerase subunit omega (66 aa).

It belongs to the RNA polymerase subunit omega family. As to quaternary structure, the RNAP catalytic core consists of 2 alpha, 1 beta, 1 beta' and 1 omega subunit. When a sigma factor is associated with the core the holoenzyme is formed, which can initiate transcription.

It carries out the reaction RNA(n) + a ribonucleoside 5'-triphosphate = RNA(n+1) + diphosphate. Its function is as follows. Promotes RNA polymerase assembly. Latches the N- and C-terminal regions of the beta' subunit thereby facilitating its interaction with the beta and alpha subunits. This Clostridium botulinum (strain Alaska E43 / Type E3) protein is DNA-directed RNA polymerase subunit omega.